The primary structure comprises 200 residues: Molybdenum cofactor guanylyltransferase (200 aa).

Residues 10–12 (LAG), lysine 23, asparagine 51, aspartate 69, and aspartate 99 contribute to the GTP site. Position 99 (aspartate 99) interacts with Mg(2+).

It belongs to the MobA family. Monomer. Mg(2+) serves as cofactor.

It is found in the cytoplasm. It catalyses the reaction Mo-molybdopterin + GTP + H(+) = Mo-molybdopterin guanine dinucleotide + diphosphate. Functionally, transfers a GMP moiety from GTP to Mo-molybdopterin (Mo-MPT) cofactor (Moco or molybdenum cofactor) to form Mo-molybdopterin guanine dinucleotide (Mo-MGD) cofactor. The chain is Molybdenum cofactor guanylyltransferase from Shewanella pealeana (strain ATCC 700345 / ANG-SQ1).